Consider the following 644-residue polypeptide: MVRPNAPDRFNEEKATYVVRGDGEGGDKPDLDRGAEVIRSVVRKLPARPGVYRMLDARGDVLYVGKARALRNRVTSYTQVARLPQRLQRMVAQTRAMEIVTTTSEAEALLLEAQLIKRYRPPYNVLLRDDKSFPFILLRTDHDFPRVQKHRGARRAKGRYYGPFASAGSVARTLNALQKTFLLRSCTDSFFANRSRPCLLYQIRRCSAPCVDRISKEDYAGLVSDAQDFLEGRSTAVQKRLGEAMTRAADAMDFEQAAVLRDRLKALTFIQGSQSVHADGLGDADVFALAAKGGQLCIAGFFIRGGQNWGHRSFFPAHVAGVPETEVMASFLMQFYEGVPPPKLILVDREPDESALLAEALGETAGRKVEISVPQRGNRKRLLDQAVRNAGEELDRRLAESSSQAKLGRELADLFDLENPPQRIEIYDNSHIQGTSALGAMVVAGPEGWMKGAYRKFNIKRAETQPGDDFAMMREVFQRRFARAIEEDPERTKGEWPDLVLIDGGKGQVSAVAAVFSELGIDDLPFVGVAKGPDRNAGRETFYLPDGREFTLPTNNAVLFYIQRLRDEAHRFAIGAHRAKRAKAMGSSPLDEVPGIGPARKKALLMHFGTTRAIKGASLEDLQKAPGVSAAVAQAVYDFYNPGG.

The GIY-YIG domain occupies 47 to 125 (ARPGVYRMLD…IKRYRPPYNV (79 aa)). In terms of domain architecture, UVR spans 235–270 (TAVQKRLGEAMTRAADAMDFEQAAVLRDRLKALTFI).

Belongs to the UvrC family. As to quaternary structure, interacts with UvrB in an incision complex.

It is found in the cytoplasm. Its function is as follows. The UvrABC repair system catalyzes the recognition and processing of DNA lesions. UvrC both incises the 5' and 3' sides of the lesion. The N-terminal half is responsible for the 3' incision and the C-terminal half is responsible for the 5' incision. This chain is UvrABC system protein C, found in Sphingopyxis alaskensis (strain DSM 13593 / LMG 18877 / RB2256) (Sphingomonas alaskensis).